Here is a 96-residue protein sequence, read N- to C-terminus: uncharacterized protein (96 aa).

3 consecutive transmembrane segments (helical) span residues 3-23, 30-50, and 68-88; these read KLTIFSGGLGAVFSVLAQLFA, TLGNLWFLGALAGIITMLASI, and IGLLGTGLVYIIPTLFNIIII.

The protein resides in the cell membrane. This is an uncharacterized protein from Bacillus subtilis (strain 168).